Consider the following 97-residue polypeptide: Large ribosomal subunit protein bL27 (97 aa).

A propeptide spanning residues 1 to 9 (MFTFDLQLF) is cleaved from the precursor.

It belongs to the bacterial ribosomal protein bL27 family. The N-terminus is cleaved by ribosomal processing cysteine protease Prp.

This Syntrophomonas wolfei subsp. wolfei (strain DSM 2245B / Goettingen) protein is Large ribosomal subunit protein bL27.